The primary structure comprises 478 residues: Receptor-interacting serine/threonine-protein kinase 3 (478 aa).

Position 2 is a phosphoserine (Ser2). In terms of domain architecture, Protein kinase spans 22-290 (LENLGFVGKG…CESKTNNVYI (269 aa)). ATP-binding positions include 28 to 36 (VGKGGFGAV) and Lys51. Residue Asp143 is the Proton acceptor of the active site. A Phosphoserine modification is found at Ser165. At Thr185 the chain carries Phosphothreonine. Ser201 bears the Phosphoserine; by autocatalysis mark. Phosphothreonine is present on Thr228. Ser229 is modified (phosphoserine; by autocatalysis). Thr254 is subject to Phosphothreonine. Phosphoserine occurs at positions 301 and 323. The tract at residues 311 to 330 (RSSDTKLSARESSQKGTEVD) is disordered. The segment covering 313-330 (SDTKLSARESSQKGTEVD) has biased composition (basic and acidic residues). Thr335 bears the Phosphothreonine mark. Residues Ser350, Ser369, and Ser380 each carry the phosphoserine modification. The tract at residues 362–429 (ERRGKEASFG…RNSNPWYTWN (68 aa)) is disordered. Residues 376 to 385 (AGTSSDTLAG) are compositionally biased toward polar residues. The residue at position 392 (Thr392) is a Phosphothreonine. Polar residues predominate over residues 413-429 (QRNQGDGRNSNPWYTWN). Positions 437–461 (LQSIVLNNCSEVQIGQHNCMSVQPR) match the RIP homotypic interaction motif (RHIM) motif. An Omega-N-methylarginine modification is found at Arg474.

It belongs to the protein kinase superfamily. TKL Ser/Thr protein kinase family. In terms of assembly, interacts (via RIP homotypic interaction motif) with RIPK1 (via RIP homotypic interaction motif); this interaction induces RIPK1 phosphorylation and formation of a RIPK1-RIPK3 necrosis-inducing complex. Interacts with MLKL; the interaction is direct and triggers necroptosis. Interacts with ZBP1 (via RIP homotypic interaction motif); interaction with ZBP1 activates RIPK3, triggering necroptosis. Upon TNF-induced necrosis, the RIPK1-RIPK3 dimer further interacts with PGAM5 and MLKL; the formation of this complex leads to PGAM5 phosphorylation and increase in PGAM5 phosphatase activity. Binds TRAF2 and is recruited to the TNFR-1 signaling complex. Interacts with PYGL, GLUL and GLUD1; these interactions result in activation of these metabolic enzymes. Interacts with BIRC2/c-IAP1, BIRC3/c-IAP2 and XIAP/BIRC4. Interacts with ARHGEF2. Interacts with PELI1 (via atypical FHA domain); the phosphorylated form at Thr-185 binds preferentially to PELI1. Interacts with BUB1B, TRAF2 and STUB1. Interacts with CASP6. Component of the AIM2 PANoptosome complex, a multiprotein complex that drives inflammatory cell death (PANoptosis). RIPK1 and RIPK3 undergo reciprocal auto- and trans-phosphorylation. Autophosphorylated following interaction with ZBP1. Phosphorylation of Ser-201 plays a role in the necroptotic function of RIPK3. Autophosphorylates at Thr-228 and Ser-229 following activation by ZBP1: phosphorylation at these sites is a hallmark of necroptosis and is required for binding MLKL. Phosphorylation at Thr-185 is important for its kinase activity, interaction with PELI1 and for its ability to mediate TNF-induced necroptosis. Post-translationally, polyubiquitinated with 'Lys-48' and 'Lys-63'-linked chains by BIRC2/c-IAP1 and BIRC3/c-IAP2, leading to activation of NF-kappa-B. Ubiquitinated by STUB1 leading to its subsequent proteasome-dependent degradation.

It is found in the cytoplasm. The protein resides in the cytosol. Its subcellular location is the nucleus. The enzyme catalyses L-seryl-[protein] + ATP = O-phospho-L-seryl-[protein] + ADP + H(+). It catalyses the reaction L-threonyl-[protein] + ATP = O-phospho-L-threonyl-[protein] + ADP + H(+). Activity is stimulated by ZBP1, which senses double-stranded Z-RNA structures. RIPK3-dependent necroptosis is inhibited by RIPK1: RIPK1 prevents the ZBP1-induced activation of RIPK3 via FADD-mediated recruitment of CASP8, which cleaves RIPK1 and limits TNF-induced necroptosis. In terms of biological role, serine/threonine-protein kinase that activates necroptosis and apoptosis, two parallel forms of cell death. Necroptosis, a programmed cell death process in response to death-inducing TNF-alpha family members, is triggered by RIPK3 following activation by ZBP1. Activated RIPK3 forms a necrosis-inducing complex and mediates phosphorylation of MLKL, promoting MLKL localization to the plasma membrane and execution of programmed necrosis characterized by calcium influx and plasma membrane damage. In addition to TNF-induced necroptosis, necroptosis can also take place in the nucleus in response to orthomyxoviruses infection: following ZBP1 activation, which senses double-stranded Z-RNA structures, nuclear RIPK3 catalyzes phosphorylation and activation of MLKL, promoting disruption of the nuclear envelope and leakage of cellular DNA into the cytosol. Also regulates apoptosis: apoptosis depends on RIPK1, FADD and CASP8, and is independent of MLKL and RIPK3 kinase activity. Phosphorylates RIPK1: RIPK1 and RIPK3 undergo reciprocal auto- and trans-phosphorylation. In some cell types, also able to restrict viral replication by promoting cell death-independent responses. In response to flavivirus infection in neurons, promotes a cell death-independent pathway that restricts viral replication: together with ZBP1, promotes a death-independent transcriptional program that modifies the cellular metabolism via up-regulation expression of the enzyme ACOD1/IRG1 and production of the metabolite itaconate. Itaconate inhibits the activity of succinate dehydrogenase, generating a metabolic state in neurons that suppresses replication of viral genomes. RIPK3 binds to and enhances the activity of three metabolic enzymes: GLUL, GLUD1, and PYGL. These metabolic enzymes may eventually stimulate the tricarboxylic acid cycle and oxidative phosphorylation, which could result in enhanced ROS production. The polypeptide is Receptor-interacting serine/threonine-protein kinase 3 (Rattus norvegicus (Rat)).